Consider the following 258-residue polypeptide: Imidazole glycerol phosphate synthase subunit HisF (258 aa).

Catalysis depends on residues aspartate 12 and aspartate 131.

Belongs to the HisA/HisF family. As to quaternary structure, heterodimer of HisH and HisF.

The protein resides in the cytoplasm. The catalysed reaction is 5-[(5-phospho-1-deoxy-D-ribulos-1-ylimino)methylamino]-1-(5-phospho-beta-D-ribosyl)imidazole-4-carboxamide + L-glutamine = D-erythro-1-(imidazol-4-yl)glycerol 3-phosphate + 5-amino-1-(5-phospho-beta-D-ribosyl)imidazole-4-carboxamide + L-glutamate + H(+). It participates in amino-acid biosynthesis; L-histidine biosynthesis; L-histidine from 5-phospho-alpha-D-ribose 1-diphosphate: step 5/9. IGPS catalyzes the conversion of PRFAR and glutamine to IGP, AICAR and glutamate. The HisF subunit catalyzes the cyclization activity that produces IGP and AICAR from PRFAR using the ammonia provided by the HisH subunit. The sequence is that of Imidazole glycerol phosphate synthase subunit HisF from Nitrosomonas europaea (strain ATCC 19718 / CIP 103999 / KCTC 2705 / NBRC 14298).